Consider the following 265-residue polypeptide: Leucine-rich repeat-containing protein Bf66946 (265 aa).

Residues 1–20 (MALRDIFLLSMAMTAVTVQA) form the signal peptide. 2 cysteine pairs are disulfide-bonded: Cys21–Cys27 and Cys25–Cys39. Residues 21 to 50 (CPSACKCTVSLYGEMVVACGGMGLTEIPED) form the LRRNT domain. LRR repeat units follow at residues 51–75 (IPHR…SFKG), 76–99 (LRNL…ALRH), and 100–123 (LGHL…LFDF). The N-linked (GlcNAc...) asparagine glycan is linked to Asn64. The 52-residue stretch at 142–193 (NPWGCDCRMAWLAQELAGGSKTFGDRHMECATPAALAGRGLSEIPQTSFVCT) folds into the LRRCT domain. Intrachain disulfides connect Cys146-Cys171 and Cys148-Cys192. Residues 220 to 240 (VAVVFGCITGLVTILLLVLTA) form a helical membrane-spanning segment.

The protein localises to the cell membrane. In terms of biological role, binds selectively to the Gram-positive bacteria S.aureus and S.pneumoniae. Does not adhere to the Gram-negative bacteria E.coli and S.enterica. Probably recognizes peptidoglycans expressed on the bacterial cell surface. The chain is Leucine-rich repeat-containing protein Bf66946 from Branchiostoma floridae (Florida lancelet).